We begin with the raw amino-acid sequence, 225 residues long: MMYHIPGVLSPQDVARFREQLGQAEWVDGRVTTGAQGAQVKNNQQVDTRSTLYAALQNEVLNAVNQHALFFAAALPRTLSTPLFNRYQNNETYGFHVDGAVRSHPQNGWMRTDLSATLFLSDPESYDGGELVVNDTFGQHRVKLPAGDLVLYPSSSLHCVTPVTRGVRVASFMWIQSMIRDDKKRAMLFELDKNIQSLKSRYGESEEILSLLNLYHNLLREWSEI.

The Fe2OG dioxygenase domain occupies 78–177 (TLSTPLFNRY…RVASFMWIQS (100 aa)). Positions 96, 98, and 158 each coordinate Fe cation. Position 168 (Arg168) interacts with 2-oxoglutarate.

Fe(2+) is required as a cofactor. L-ascorbate serves as cofactor.

This is PKHD-type hydroxylase YbiX from Shigella dysenteriae serotype 1 (strain Sd197).